Here is a 174-residue protein sequence, read N- to C-terminus: Methylated protein MJ0556 (174 aa).

2 CBS domains span residues 28-87 and 91-156; these read MISG…YLNV and MLKN…IIKE.

In terms of processing, methylated at an undetermined residue between Ser-2 and Asp-26.

This Methanocaldococcus jannaschii (strain ATCC 43067 / DSM 2661 / JAL-1 / JCM 10045 / NBRC 100440) (Methanococcus jannaschii) protein is Methylated protein MJ0556.